The sequence spans 90 residues: DNA-directed RNA polymerase subunit omega (90 aa).

A disordered region spans residues 70–90; the sequence is QEQQEQEAAELAAVSSIMHNR.

This sequence belongs to the RNA polymerase subunit omega family. The RNAP catalytic core consists of 2 alpha, 1 beta, 1 beta' and 1 omega subunit. When a sigma factor is associated with the core the holoenzyme is formed, which can initiate transcription.

It catalyses the reaction RNA(n) + a ribonucleoside 5'-triphosphate = RNA(n+1) + diphosphate. Promotes RNA polymerase assembly. Latches the N- and C-terminal regions of the beta' subunit thereby facilitating its interaction with the beta and alpha subunits. The chain is DNA-directed RNA polymerase subunit omega from Vibrio cholerae serotype O1 (strain ATCC 39541 / Classical Ogawa 395 / O395).